The following is a 366-amino-acid chain: Cytochrome c peroxidase, mitochondrial (366 aa).

H123 acts as the Proton acceptor in catalysis. Positions I195–T206 are enriched in basic and acidic residues. Positions I195–D218 are disordered. H247 contributes to the heme b binding site. W263 serves as the catalytic Tryptophan radical intermediate.

This sequence belongs to the peroxidase family. Cytochrome c peroxidase subfamily. Forms a one-to-one complex with cytochrome c. Heme b serves as cofactor.

It is found in the mitochondrion matrix. It localises to the mitochondrion intermembrane space. The enzyme catalyses 2 Fe(II)-[cytochrome c] + H2O2 + 2 H(+) = 2 Fe(III)-[cytochrome c] + 2 H2O. Its function is as follows. Destroys radicals which are normally produced within the cells and which are toxic to biological systems. This chain is Cytochrome c peroxidase, mitochondrial (CCP1), found in Candida albicans (strain SC5314 / ATCC MYA-2876) (Yeast).